The chain runs to 453 residues: tRNA modification GTPase MnmE (453 aa).

3 residues coordinate (6S)-5-formyl-5,6,7,8-tetrahydrofolate: Arg-22, Glu-79, and Lys-119. Residues 215-376 (GMKVVIAGRP…LKLHLKSLMG (162 aa)) enclose the TrmE-type G domain. Asn-225 is a K(+) binding site. Residues 225–230 (NAGKSS), 244–250 (TEIAGTT), 269–272 (DTAG), and 334–337 (NKAD) contribute to the GTP site. Ser-229 serves as a coordination point for Mg(2+). The K(+) site is built by Thr-244, Ile-246, and Thr-249. Thr-250 contributes to the Mg(2+) binding site. Lys-453 contacts (6S)-5-formyl-5,6,7,8-tetrahydrofolate.

This sequence belongs to the TRAFAC class TrmE-Era-EngA-EngB-Septin-like GTPase superfamily. TrmE GTPase family. As to quaternary structure, homodimer. Heterotetramer of two MnmE and two MnmG subunits. The cofactor is K(+).

It is found in the cytoplasm. Its function is as follows. Exhibits a very high intrinsic GTPase hydrolysis rate. Involved in the addition of a carboxymethylaminomethyl (cmnm) group at the wobble position (U34) of certain tRNAs, forming tRNA-cmnm(5)s(2)U34. This is tRNA modification GTPase MnmE from Shewanella putrefaciens (strain CN-32 / ATCC BAA-453).